The following is a 483-amino-acid chain: Probable cysteine protease ATG4 (483 aa).

The active-site Nucleophile is Cys141. Catalysis depends on residues Asp315 and His317.

This sequence belongs to the peptidase C54 family.

It localises to the cytoplasm. It is found in the nucleus. The protein localises to the preautophagosomal structure. The enzyme catalyses [protein]-C-terminal L-amino acid-glycyl-phosphatidylethanolamide + H2O = [protein]-C-terminal L-amino acid-glycine + a 1,2-diacyl-sn-glycero-3-phosphoethanolamine. Functionally, cysteine protease that plays a key role in cytoplasm to vacuole transport (Cvt) and autophagy by mediating both proteolytic activation and delipidation of ATG8. Required for selective autophagic degradation of the nucleus (nucleophagy) as well as for mitophagy which contributes to regulate mitochondrial quantity and quality by eliminating the mitochondria to a basal level to fulfill cellular energy requirements and preventing excess ROS production. The protease activity is required for proteolytic activation of ATG8: cleaves the C-terminal amino acid of ATG8 to reveal a C-terminal glycine. ATG8 ubiquitin-like activity requires the exposure of the glycine at the C-terminus for its conjugation to phosphatidylethanolamine (PE) and its insertion to membranes, which is necessary for autophagy. The ATG8-PE conjugate mediates tethering between adjacent membranes and stimulates membrane hemifusion, leading to expansion of the autophagosomal membrane during autophagy. In addition to the protease activity, also catalyzes deconjugation of PE-conjugated forms of ATG8 during macroautophagy: ATG8 delipidation is required to release the protein from membranes, which facilitates multiple events during macroautophagy, and especially for efficient autophagosome biogenesis, the assembly of ATG9-containing tubulovesicular clusters into phagophores/autophagosomes, and for the disassembly of PAS-associated ATG components. ATG8 delipidation by ATG4 also recycles ATG8-PE generated on inappropriate membranes to maintain a reservoir of unlipidated ATG8 that is required for autophagosome formation at the PAS. This chain is Probable cysteine protease ATG4 (ATG4), found in Candida glabrata (strain ATCC 2001 / BCRC 20586 / JCM 3761 / NBRC 0622 / NRRL Y-65 / CBS 138) (Yeast).